The chain runs to 1813 residues: Sucrase-isomaltase, intestinal (1813 aa).

Residues 1-12 lie on the Cytoplasmic side of the membrane; the sequence is MARKKSSGLKIT. The residue at position 7 (Ser7) is a Phosphoserine; by PKA. The helical; Signal-anchor for type II membrane protein transmembrane segment at 13–32 threads the bilayer; it reads LIVLLAIVTIIAIALVAILP. At 33 to 1813 the chain is on the lumenal side; sequence TKTPAVELVS…LDEPIEISWT (1781 aa). One can recognise a P-type 1 domain in the interval 46–95; sequence GKCPSAENDRLDEKINCIPDQFPTQALCAMQGCCWNPRNESPTPWCSFAN. 3 disulfide bridges follow: Cys48/Cys79, Cys62/Cys78, and Cys73/Cys91. The tract at residues 95–991 is isomaltase; that stretch reads NNHGYEFEKI…DLELNTATAR (897 aa). A glycan (N-linked (GlcNAc...) asparagine) is linked at Asn127. Residues Asp250 and Asp374 each contribute to the substrate site. Position 377 is a sulfotyrosine (Tyr377). N-linked (GlcNAc...) asparagine glycosylation is present at Asn388. The active-site Nucleophile; for isomaltase activity is Asp491. Cys506 and Cys531 form a disulfide bridge. Arg574 is a binding site for substrate. Residue Asp590 is the For isomaltase activity of the active site. Cys621 and Cys632 are oxidised to a cystine. Substrate is bound at residue His648. 4 N-linked (GlcNAc...) asparagine glycosylation sites follow: Asn669, Asn791, Asn896, and Asn911. The 46-residue stretch at 917–962 folds into the P-type 2 domain; sequence NQVSLDSEKIDCFPDNNPENKQNCEERGCLWEPNSAAEGPRCYFPK. The tract at residues 992–1813 is sucrase; that stretch reads IKMPSNPISV…LDEPIEISWT (822 aa). Asn1221 and Asn1289 each carry an N-linked (GlcNAc...) asparagine glycan. Tyr1294 is modified (sulfotyrosine). Residues Asn1326 and Asn1340 are each glycosylated (N-linked (GlcNAc...) asparagine). Sulfotyrosine occurs at positions 1368 and 1371. Catalysis depends on Asp1380, which acts as the Nucleophile; for sucrase activity. Glu1383 functions as the For sucrase activity in the catalytic mechanism. A glycan (N-linked (GlcNAc...) asparagine) is linked at Asn1432. Asp1486 functions as the Proton donor; for sucrase activity in the catalytic mechanism. N-linked (GlcNAc...) asparagine glycans are attached at residues Asn1521, Asn1545, Asn1558, Asn1703, and Asn1772.

This sequence belongs to the glycosyl hydrolase 31 family. In terms of assembly, the resulting sucrase and isomaltase subunits stay associated with one another in a complex by non-covalent linkages. In terms of processing, the precursor is proteolytically cleaved when exposed to pancreatic proteases in the intestinal lumen. Post-translationally, sulfated.

It is found in the apical cell membrane. The catalysed reaction is Hydrolysis of sucrose and maltose by an alpha-D-glucosidase-type action.. It catalyses the reaction Hydrolysis of (1-&gt;6)-alpha-D-glucosidic linkages in some oligosaccharides produced from starch and glycogen by alpha-amylase, and in isomaltose.. Its function is as follows. Plays an important role in the final stage of carbohydrate digestion. Isomaltase activity is specific for both alpha-1,4- and alpha-1,6-oligosaccharides. The chain is Sucrase-isomaltase, intestinal (SI) from Suncus murinus (Asian house shrew).